The primary structure comprises 330 residues: Putative 4-hydroxythreonine-4-phosphate dehydrogenase (330 aa).

The a divalent metal cation site is built by H169, H213, and H263.

Belongs to the PdxA family. Homodimer. The cofactor is Zn(2+). Mg(2+) serves as cofactor. Co(2+) is required as a cofactor.

Its subcellular location is the cytoplasm. The enzyme catalyses 4-(phosphooxy)-L-threonine + NAD(+) = 3-amino-2-oxopropyl phosphate + CO2 + NADH. It functions in the pathway cofactor biosynthesis; pyridoxine 5'-phosphate biosynthesis; pyridoxine 5'-phosphate from D-erythrose 4-phosphate: step 4/5. Catalyzes the NAD(P)-dependent oxidation of 4-(phosphooxy)-L-threonine (HTP) into 2-amino-3-oxo-4-(phosphooxy)butyric acid which spontaneously decarboxylates to form 3-amino-2-oxopropyl phosphate (AHAP). In Novosphingobium aromaticivorans (Sphingomonas aromaticivorans), this protein is Putative 4-hydroxythreonine-4-phosphate dehydrogenase.